We begin with the raw amino-acid sequence, 714 residues long: Phosphoribosylformylglycinamidine synthase subunit PurL (714 aa).

Residue H34 is part of the active site. Y37 provides a ligand contact to ATP. E78 contributes to the Mg(2+) binding site. Substrate contacts are provided by residues 79–82 and R101; that span reads SHNH. H80 functions as the Proton acceptor in the catalytic mechanism. D102 serves as a coordination point for Mg(2+). Q226 provides a ligand contact to substrate. D254 serves as a coordination point for Mg(2+). 298 to 300 contacts substrate; that stretch reads ESQ. Residues D474 and G511 each contribute to the ATP site. N512 serves as a coordination point for Mg(2+). Residue S514 participates in substrate binding.

Belongs to the FGAMS family. In terms of assembly, monomer. Part of the FGAM synthase complex composed of 1 PurL, 1 PurQ and 2 PurS subunits.

The protein localises to the cytoplasm. It carries out the reaction N(2)-formyl-N(1)-(5-phospho-beta-D-ribosyl)glycinamide + L-glutamine + ATP + H2O = 2-formamido-N(1)-(5-O-phospho-beta-D-ribosyl)acetamidine + L-glutamate + ADP + phosphate + H(+). It participates in purine metabolism; IMP biosynthesis via de novo pathway; 5-amino-1-(5-phospho-D-ribosyl)imidazole from N(2)-formyl-N(1)-(5-phospho-D-ribosyl)glycinamide: step 1/2. Its function is as follows. Part of the phosphoribosylformylglycinamidine synthase complex involved in the purines biosynthetic pathway. Catalyzes the ATP-dependent conversion of formylglycinamide ribonucleotide (FGAR) and glutamine to yield formylglycinamidine ribonucleotide (FGAM) and glutamate. The FGAM synthase complex is composed of three subunits. PurQ produces an ammonia molecule by converting glutamine to glutamate. PurL transfers the ammonia molecule to FGAR to form FGAM in an ATP-dependent manner. PurS interacts with PurQ and PurL and is thought to assist in the transfer of the ammonia molecule from PurQ to PurL. This is Phosphoribosylformylglycinamidine synthase subunit PurL from Methanothermobacter marburgensis (strain ATCC BAA-927 / DSM 2133 / JCM 14651 / NBRC 100331 / OCM 82 / Marburg) (Methanobacterium thermoautotrophicum).